We begin with the raw amino-acid sequence, 117 residues long: Pterin-4-alpha-carbinolamine dehydratase 2 (117 aa).

An N6-acetyllysine; alternate mark is found at Lys101, Lys105, and Lys112. N6-succinyllysine; alternate is present on residues Lys101, Lys105, and Lys112.

This sequence belongs to the pterin-4-alpha-carbinolamine dehydratase family. Homotetramer. Interacts with DYRK1B.

The catalysed reaction is (4aS,6R)-4a-hydroxy-L-erythro-5,6,7,8-tetrahydrobiopterin = (6R)-L-erythro-6,7-dihydrobiopterin + H2O. Its function is as follows. Involved in tetrahydrobiopterin biosynthesis. Seems to both prevent the formation of 7-pterins and accelerate the formation of quinonoid-BH2. Regulates the dimerization of homeodomain protein HNF-1-alpha and enhances its transcriptional activity. This is Pterin-4-alpha-carbinolamine dehydratase 2 (PCBD2) from Pongo abelii (Sumatran orangutan).